A 714-amino-acid polypeptide reads, in one-letter code: Fumarate reductase flavoprotein subunit (714 aa).

FAD is bound by residues 13–16 (GGLA), 42–44 (SHS), and 49–50 (GG). A Tele-8alpha-FAD histidine modification is found at H43. Catalysis depends on residues H257 and R273. FAD is bound by residues E420 and 436 to 437 (SV).

This sequence belongs to the FAD-dependent oxidoreductase 2 family. FRD/SDH subfamily. In terms of assembly, part of an enzyme complex containing three subunits: a flavoprotein (frdA), an iron-sulfur protein (frdB), and diheme cytochrome b (frdC). FAD serves as cofactor.

The protein localises to the cell inner membrane. It catalyses the reaction a quinone + succinate = fumarate + a quinol. Functionally, the fumarate reductase enzyme complex is required for fumarate respiration. The protein is Fumarate reductase flavoprotein subunit (frdA) of Helicobacter pylori (strain ATCC 700392 / 26695) (Campylobacter pylori).